The primary structure comprises 349 residues: Glycerol-3-phosphate dehydrogenase [NAD(+)], cytoplasmic (349 aa).

Residue 10–15 coordinates NAD(+); that stretch reads GSGNWG. Lys120 is a substrate binding site. Position 153 (Ala153) interacts with NAD(+). Ser154 is subject to Phosphoserine. Lys204 acts as the Proton acceptor in catalysis. Arg269 is an NAD(+) binding site. 269 to 270 is a binding site for substrate; sequence RN. Lys289 is modified (N6-succinyllysine). Residues Lys296 and Gln298 each contribute to the NAD(+) site. Tyr326 carries the post-translational modification Phosphotyrosine.

Belongs to the NAD-dependent glycerol-3-phosphate dehydrogenase family. As to quaternary structure, homodimer.

The protein resides in the cytoplasm. It carries out the reaction sn-glycerol 3-phosphate + NAD(+) = dihydroxyacetone phosphate + NADH + H(+). Its function is as follows. Has glycerol-3-phosphate dehydrogenase activity. This chain is Glycerol-3-phosphate dehydrogenase [NAD(+)], cytoplasmic, found in Mus musculus (Mouse).